The following is a 239-amino-acid chain: Purine nucleoside phosphorylase DeoD-type (239 aa).

His5 contributes to the a purine D-ribonucleoside binding site. Phosphate is bound by residues Gly21, Arg25, Arg44, and Arg88 to Ser91. Residues Glu180–Glu182 and Ser204–Asp205 each bind a purine D-ribonucleoside. Residue Asp205 is the Proton donor of the active site.

The protein belongs to the PNP/UDP phosphorylase family. Homohexamer; trimer of homodimers.

The catalysed reaction is a purine D-ribonucleoside + phosphate = a purine nucleobase + alpha-D-ribose 1-phosphate. It carries out the reaction a purine 2'-deoxy-D-ribonucleoside + phosphate = a purine nucleobase + 2-deoxy-alpha-D-ribose 1-phosphate. Functionally, catalyzes the reversible phosphorolytic breakdown of the N-glycosidic bond in the beta-(deoxy)ribonucleoside molecules, with the formation of the corresponding free purine bases and pentose-1-phosphate. This Salmonella agona (strain SL483) protein is Purine nucleoside phosphorylase DeoD-type.